The sequence spans 393 residues: Rubredoxin-NAD(+) reductase (393 aa).

FAD contacts are provided by residues 9–12 (SGMA), 33–34 (CA), Lys42, Val80, Glu162, Asp282, Val294, and Lys325.

It belongs to the FAD-dependent oxidoreductase family. In terms of assembly, homodimer. FAD serves as cofactor.

It localises to the cytoplasm. The catalysed reaction is 2 reduced [rubredoxin] + NAD(+) + H(+) = 2 oxidized [rubredoxin] + NADH. It participates in hydrocarbon metabolism; alkane degradation. Its function is as follows. Involved in the hydrocarbon hydroxylating system, which transfers electrons from NADH to rubredoxin reductase and then through rubredoxin to alkane 1 monooxygenase. This is Rubredoxin-NAD(+) reductase (rubB) from Acinetobacter baylyi (strain ATCC 33305 / BD413 / ADP1).